A 62-amino-acid chain; its full sequence is Photosystem II reaction center protein Z (62 aa).

The next 2 membrane-spanning stretches (helical) occupy residues 8 to 28 and 41 to 61; these read AVFA…VVLA and FSGA…NSLI.

Belongs to the PsbZ family. PSII is composed of 1 copy each of membrane proteins PsbA, PsbB, PsbC, PsbD, PsbE, PsbF, PsbH, PsbI, PsbJ, PsbK, PsbL, PsbM, PsbT, PsbY, PsbZ, Psb30/Ycf12, at least 3 peripheral proteins of the oxygen-evolving complex and a large number of cofactors. It forms dimeric complexes.

The protein resides in the plastid. Its subcellular location is the chloroplast thylakoid membrane. Functionally, may control the interaction of photosystem II (PSII) cores with the light-harvesting antenna, regulates electron flow through the 2 photosystem reaction centers. PSII is a light-driven water plastoquinone oxidoreductase, using light energy to abstract electrons from H(2)O, generating a proton gradient subsequently used for ATP formation. In Huperzia lucidula (Shining clubmoss), this protein is Photosystem II reaction center protein Z.